Consider the following 469-residue polypeptide: uncharacterized protein (469 aa).

The tract at residues 203-244 (ACPVPPQGHASSAADQAGVPERGRKRAHEGPGAGEAASAGRG) is disordered.

This sequence belongs to the epstein-barr virus LF1 family.

This is an uncharacterized protein from Epstein-Barr virus (strain AG876) (HHV-4).